Consider the following 119-residue polypeptide: Holo-[acyl-carrier-protein] synthase (119 aa).

Asp8 and Glu58 together coordinate Mg(2+).

Belongs to the P-Pant transferase superfamily. AcpS family. Mg(2+) serves as cofactor.

It is found in the cytoplasm. The enzyme catalyses apo-[ACP] + CoA = holo-[ACP] + adenosine 3',5'-bisphosphate + H(+). In terms of biological role, transfers the 4'-phosphopantetheine moiety from coenzyme A to a Ser of acyl-carrier-protein. The polypeptide is Holo-[acyl-carrier-protein] synthase (Lactobacillus johnsonii (strain CNCM I-12250 / La1 / NCC 533)).